The chain runs to 558 residues: Dihydroxy-acid dehydratase (558 aa).

Mg(2+) is bound at residue Asp-78. Position 119 (Cys-119) interacts with [2Fe-2S] cluster. Residues Asp-120 and Lys-121 each coordinate Mg(2+). Lys-121 carries the post-translational modification N6-carboxylysine. Cys-192 provides a ligand contact to [2Fe-2S] cluster. Glu-446 lines the Mg(2+) pocket. Ser-472 functions as the Proton acceptor in the catalytic mechanism.

It belongs to the IlvD/Edd family. Homodimer. It depends on [2Fe-2S] cluster as a cofactor. Mg(2+) serves as cofactor.

The enzyme catalyses (2R)-2,3-dihydroxy-3-methylbutanoate = 3-methyl-2-oxobutanoate + H2O. It catalyses the reaction (2R,3R)-2,3-dihydroxy-3-methylpentanoate = (S)-3-methyl-2-oxopentanoate + H2O. It functions in the pathway amino-acid biosynthesis; L-isoleucine biosynthesis; L-isoleucine from 2-oxobutanoate: step 3/4. The protein operates within amino-acid biosynthesis; L-valine biosynthesis; L-valine from pyruvate: step 3/4. Functions in the biosynthesis of branched-chain amino acids. Catalyzes the dehydration of (2R,3R)-2,3-dihydroxy-3-methylpentanoate (2,3-dihydroxy-3-methylvalerate) into 2-oxo-3-methylpentanoate (2-oxo-3-methylvalerate) and of (2R)-2,3-dihydroxy-3-methylbutanoate (2,3-dihydroxyisovalerate) into 2-oxo-3-methylbutanoate (2-oxoisovalerate), the penultimate precursor to L-isoleucine and L-valine, respectively. The chain is Dihydroxy-acid dehydratase from Campylobacter lari (strain RM2100 / D67 / ATCC BAA-1060).